A 233-amino-acid polypeptide reads, in one-letter code: 7-cyano-7-deazaguanine synthase 2 (233 aa).

Position 8–18 (8–18) interacts with ATP; the sequence is LSGGLDSTTCM. 4 residues coordinate Zn(2+): cysteine 186, cysteine 194, cysteine 197, and cysteine 200.

The protein belongs to the QueC family. Homodimer. Zn(2+) serves as cofactor.

It catalyses the reaction 7-carboxy-7-deazaguanine + NH4(+) + ATP = 7-cyano-7-deazaguanine + ADP + phosphate + H2O + H(+). Its pathway is purine metabolism; 7-cyano-7-deazaguanine biosynthesis. Its function is as follows. Catalyzes the ATP-dependent conversion of 7-carboxy-7-deazaguanine (CDG) to 7-cyano-7-deazaguanine (preQ(0)). This chain is 7-cyano-7-deazaguanine synthase 2, found in Desulfitobacterium hafniense (strain Y51).